The primary structure comprises 821 residues: Putative outer membrane usher protein YqiG (821 aa).

The first 20 residues, 1-20 (MSGNIGANPVIIIGCASAYA), serve as a signal peptide directing secretion. Residues Cys-798 and Cys-817 are joined by a disulfide bond.

The protein belongs to the fimbrial export usher family.

The protein localises to the cell outer membrane. In terms of biological role, may be involved in H(2) production during fermentative growth. Involved in the export and assembly of a fimbrial subunit across the outer membrane. The polypeptide is Putative outer membrane usher protein YqiG (yqiG) (Escherichia coli (strain K12)).